A 124-amino-acid polypeptide reads, in one-letter code: Small ribosomal subunit protein uS12cy (124 aa).

This sequence belongs to the universal ribosomal protein uS12 family. As to quaternary structure, part of the 30S ribosomal subunit.

It localises to the plastid. It is found in the chloroplast. Its function is as follows. With S4 and S5 plays an important role in translational accuracy. Located at the interface of the 30S and 50S subunits. In Olimarabidopsis pumila (Dwarf rocket), this protein is Small ribosomal subunit protein uS12cy (rps12-B).